Consider the following 479-residue polypeptide: Aspartyl/glutamyl-tRNA(Asn/Gln) amidotransferase subunit B (479 aa).

The protein belongs to the GatB/GatE family. GatB subfamily. In terms of assembly, heterotrimer of A, B and C subunits.

The catalysed reaction is L-glutamyl-tRNA(Gln) + L-glutamine + ATP + H2O = L-glutaminyl-tRNA(Gln) + L-glutamate + ADP + phosphate + H(+). It carries out the reaction L-aspartyl-tRNA(Asn) + L-glutamine + ATP + H2O = L-asparaginyl-tRNA(Asn) + L-glutamate + ADP + phosphate + 2 H(+). Allows the formation of correctly charged Asn-tRNA(Asn) or Gln-tRNA(Gln) through the transamidation of misacylated Asp-tRNA(Asn) or Glu-tRNA(Gln) in organisms which lack either or both of asparaginyl-tRNA or glutaminyl-tRNA synthetases. The reaction takes place in the presence of glutamine and ATP through an activated phospho-Asp-tRNA(Asn) or phospho-Glu-tRNA(Gln). This is Aspartyl/glutamyl-tRNA(Asn/Gln) amidotransferase subunit B from Mesoplasma florum (strain ATCC 33453 / NBRC 100688 / NCTC 11704 / L1) (Acholeplasma florum).